A 142-amino-acid chain; its full sequence is MAKKVQAYVKLQVAAGMANPSPPVGPALGQQGVNIMEFCKAFNARTESLEKGLPIPVVITVYADRSFTFVTKTPPAAVLLKKAAGIKSGSGKPNKDKVGKVTLDQVRQIAETKAADMTGASIETKMKSIAGTARSMGLVVEE.

It belongs to the universal ribosomal protein uL11 family. As to quaternary structure, part of the ribosomal stalk of the 50S ribosomal subunit. Interacts with L10 and the large rRNA to form the base of the stalk. L10 forms an elongated spine to which L12 dimers bind in a sequential fashion forming a multimeric L10(L12)X complex. In terms of processing, one or more lysine residues are methylated.

In terms of biological role, forms part of the ribosomal stalk which helps the ribosome interact with GTP-bound translation factors. The chain is Large ribosomal subunit protein uL11 from Haemophilus influenzae (strain PittGG).